The chain runs to 266 residues: Putative pyruvate, phosphate dikinase regulatory protein (266 aa).

Position 149 to 156 (149 to 156) interacts with ADP; the sequence is GVSRTSKT.

It belongs to the pyruvate, phosphate/water dikinase regulatory protein family. PDRP subfamily.

The enzyme catalyses N(tele)-phospho-L-histidyl/L-threonyl-[pyruvate, phosphate dikinase] + ADP = N(tele)-phospho-L-histidyl/O-phospho-L-threonyl-[pyruvate, phosphate dikinase] + AMP + H(+). The catalysed reaction is N(tele)-phospho-L-histidyl/O-phospho-L-threonyl-[pyruvate, phosphate dikinase] + phosphate + H(+) = N(tele)-phospho-L-histidyl/L-threonyl-[pyruvate, phosphate dikinase] + diphosphate. Bifunctional serine/threonine kinase and phosphorylase involved in the regulation of the pyruvate, phosphate dikinase (PPDK) by catalyzing its phosphorylation/dephosphorylation. The sequence is that of Putative pyruvate, phosphate dikinase regulatory protein from Geobacillus kaustophilus (strain HTA426).